The primary structure comprises 726 residues: Catalase-peroxidase (726 aa).

Residues 90–213 (WHAAGTYRIG…LAAVQMGLIY (124 aa)) constitute a cross-link (tryptophyl-tyrosyl-methioninium (Trp-Tyr) (with M-239)). H91 acts as the Proton acceptor in catalysis. A cross-link (tryptophyl-tyrosyl-methioninium (Tyr-Met) (with W-90)) is located at residues 213-239 (YVNPEGPNGKPDPAAAARDIRETFARM). H254 serves as a coordination point for heme b. The segment at 338 to 359 (TPKGGAGAGTVPDAHDPSKRHA) is disordered.

It belongs to the peroxidase family. Peroxidase/catalase subfamily. As to quaternary structure, homodimer or homotetramer. The cofactor is heme b. Post-translationally, formation of the three residue Trp-Tyr-Met cross-link is important for the catalase, but not the peroxidase activity of the enzyme.

The catalysed reaction is H2O2 + AH2 = A + 2 H2O. The enzyme catalyses 2 H2O2 = O2 + 2 H2O. Functionally, bifunctional enzyme with both catalase and broad-spectrum peroxidase activity. The protein is Catalase-peroxidase of Bradyrhizobium sp. (strain ORS 278).